Here is a 392-residue protein sequence, read N- to C-terminus: MSFDLAARLAARRAEHLYRQRPLLQSPQGPQVVVDGQPLLAFCNNDYLGLANHPQVIEAWRSGASRWGVGGGASHLVIGHSTPHHALEEALAELTGRPRALLFTTGYMANLGAVTALVGQGDTVLEDRLNHASLLDAGLLSGARFNRYLHNDAHSLAKRLEKATGNTLVVTDGVFSMDGDVADLPALARATKARGAWLMVDDAHGFGPLGANGGGLVEHFGLGLDEVPVLVGTLGKAFGTAGAFVAGSEDLIESLIQFARPYIYTTSQPPALACATLKSLELLRSEHWRREHLAALIRQFRQGAEQIGLQLMDSFTPIQPILVGDSARAVRLSQMLRERGIMVSAIRPPTVPAGSARLRVTLSAAHSEAQVQLLLSALADCFRELQAEPSHA.

Substrate is bound at residue Arg-19. 106 to 107 (GY) is a pyridoxal 5'-phosphate binding site. His-131 serves as a coordination point for substrate. The pyridoxal 5'-phosphate site is built by Ser-176, His-204, and Thr-233. Lys-236 is modified (N6-(pyridoxal phosphate)lysine). Substrate is bound at residue Thr-350.

The protein belongs to the class-II pyridoxal-phosphate-dependent aminotransferase family. BioF subfamily. In terms of assembly, homodimer. Requires pyridoxal 5'-phosphate as cofactor.

It catalyses the reaction 6-carboxyhexanoyl-[ACP] + L-alanine + H(+) = (8S)-8-amino-7-oxononanoate + holo-[ACP] + CO2. Its pathway is cofactor biosynthesis; biotin biosynthesis. Functionally, catalyzes the decarboxylative condensation of pimeloyl-[acyl-carrier protein] and L-alanine to produce 8-amino-7-oxononanoate (AON), [acyl-carrier protein], and carbon dioxide. This chain is 8-amino-7-oxononanoate synthase, found in Pseudomonas fluorescens (strain ATCC BAA-477 / NRRL B-23932 / Pf-5).